Reading from the N-terminus, the 581-residue chain is Caprolactamase subunit beta (581 aa).

4 residues coordinate Zn(2+): Asp-41, His-99, Asp-102, and His-124.

Belongs to the HyuB family. As to quaternary structure, the caprolactamase is a heterotetramer composed of two alpha subunits (CapA) and two beta subunits (CapB). Zn(2+) is required as a cofactor.

Activity is dependent on the presence of ATP and bicarbonate. The requirement for bicarbonate may be related to allosteric activation through conformational effects, but it is also conceivable that carboxyphosphate is formed and acts as a mediator in caprolactam activation, forming carboxy- or phospholactim. Component of a caprolactamase involved in the degradation of caprolactam, an industrial compound mainly used in the production of Nylon 6. Catalyzes the ATP-dependent hydrolysis of the caprolactam ring to form 6-aminocaproic acid (6-ACA). The beta subunit is responsible for hydrolytic lactam ring opening. The enzyme cannot use 5-oxoproline. This Pseudomonas jessenii protein is Caprolactamase subunit beta.